The following is a 92-amino-acid chain: Small ribosomal subunit protein uS19 (92 aa).

This sequence belongs to the universal ribosomal protein uS19 family.

In terms of biological role, protein S19 forms a complex with S13 that binds strongly to the 16S ribosomal RNA. The chain is Small ribosomal subunit protein uS19 from Shewanella amazonensis (strain ATCC BAA-1098 / SB2B).